We begin with the raw amino-acid sequence, 457 residues long: Phosphomethylpyrimidine synthase (457 aa).

Substrate contacts are provided by residues N80, M109, Y139, H175, 195 to 197, 236 to 239, and E275; these read SRG and DSLR. H279 contributes to the Zn(2+) binding site. Y302 lines the substrate pocket. Zn(2+) is bound at residue H343. [4Fe-4S] cluster is bound by residues C423, C426, and C431.

The protein belongs to the ThiC family. It depends on [4Fe-4S] cluster as a cofactor.

The enzyme catalyses 5-amino-1-(5-phospho-beta-D-ribosyl)imidazole + S-adenosyl-L-methionine = 4-amino-2-methyl-5-(phosphooxymethyl)pyrimidine + CO + 5'-deoxyadenosine + formate + L-methionine + 3 H(+). It functions in the pathway cofactor biosynthesis; thiamine diphosphate biosynthesis. Functionally, catalyzes the synthesis of the hydroxymethylpyrimidine phosphate (HMP-P) moiety of thiamine from aminoimidazole ribotide (AIR) in a radical S-adenosyl-L-methionine (SAM)-dependent reaction. This is Phosphomethylpyrimidine synthase from Nostoc punctiforme (strain ATCC 29133 / PCC 73102).